A 398-amino-acid chain; its full sequence is S-adenosylmethionine decarboxylase proenzyme (398 aa).

Catalysis depends on residues glutamate 18 and glutamate 21. Serine 78 functions as the Schiff-base intermediate with substrate; via pyruvic acid in the catalytic mechanism. The residue at position 78 (serine 78) is a Pyruvic acid (Ser); by autocatalysis. Cysteine 92 serves as the catalytic Proton donor; for catalytic activity. Active-site proton acceptor; for processing activity residues include serine 243 and histidine 256.

It belongs to the eukaryotic AdoMetDC family. The cofactor is pyruvate. Is synthesized initially as an inactive proenzyme. Formation of the active enzyme involves a self-maturation process in which the active site pyruvoyl group is generated from an internal serine residue via an autocatalytic post-translational modification. Two non-identical subunits are generated from the proenzyme in this reaction, and the pyruvate is formed at the N-terminus of the alpha chain, which is derived from the carboxyl end of the proenzyme. The post-translation cleavage follows an unusual pathway, termed non-hydrolytic serinolysis, in which the side chain hydroxyl group of the serine supplies its oxygen atom to form the C-terminus of the beta chain, while the remainder of the serine residue undergoes an oxidative deamination to produce ammonia and the pyruvoyl group blocking the N-terminus of the alpha chain.

It catalyses the reaction S-adenosyl-L-methionine + H(+) = S-adenosyl 3-(methylsulfanyl)propylamine + CO2. It functions in the pathway amine and polyamine biosynthesis; S-adenosylmethioninamine biosynthesis; S-adenosylmethioninamine from S-adenosyl-L-methionine: step 1/1. In Oryza sativa subsp. indica (Rice), this protein is S-adenosylmethionine decarboxylase proenzyme (SAMDC).